The sequence spans 290 residues: Aquaporin-3 (290 aa).

The Cytoplasmic segment spans residues 1 to 24 (MGRQKELVTRCGEMLHIRYRLLRQ). A helical membrane pass occupies residues 25–42 (ALAECLGTLILVMFGCGS). The Extracellular segment spans residues 43–56 (VAQVVLSRGTHGGF). Residues 57-74 (LTINLAFGFAVTLGILVA) form a helical membrane-spanning segment. Residues 75 to 78 (GQVS) lie on the Cytoplasmic side of the membrane. Residues 79–92 (GAHLNPAVTFAMCF) constitute an intramembrane region (discontinuously helical). Positions 83–85 (NPA) match the NPA 1 motif. At 93–100 (LAREPWIK) the chain is on the cytoplasmic side. The helical transmembrane segment at 101–121 (LPVYTLAQTLGAFLGAGIIFG) threads the bilayer. The Extracellular portion of the chain corresponds to 122–159 (LYYDAIWAFANNQLIVSGPNGTAGIFATYPSGHLDMVN). N141 carries N-linked (GlcNAc...) asparagine glycosylation. A helical membrane pass occupies residues 160–177 (GFFDQFIGTASLIVCVLA). The Cytoplasmic portion of the chain corresponds to 178-189 (IVDPNNNPVPRG). The chain crosses the membrane as a helical span at residues 190–206 (LEAFTVGLVVLVIGTSM). The Extracellular segment spans residues 207 to 210 (GFNS). The segment at residues 211–224 (GYAVNPARDFGPRL) is an intramembrane region (discontinuously helical). Positions 215–217 (NPA) match the NPA 2 motif. Residues 225–242 (FTAIAGWGSEVFTTGRHW) lie on the Extracellular side of the membrane. A helical transmembrane segment spans residues 243-264 (WWVPIASPLLGSIAGVFVYQLM). The Cytoplasmic portion of the chain corresponds to 265-290 (IGCHLEPPPPSTDEENVKLSQVKHKE).

It belongs to the MIP/aquaporin (TC 1.A.8) family. As to quaternary structure, homotetramer; each monomer provides an independent glycerol/water pore. Could also exist in other oligomeric states. Highly expressed in stomach and spleen, with lower expression in kidney and lung.

It localises to the cell membrane. It is found in the basolateral cell membrane. The enzyme catalyses glycerol(in) = glycerol(out). The catalysed reaction is H2O(in) = H2O(out). It carries out the reaction urea(in) = urea(out). It catalyses the reaction H2O2(out) = H2O2(in). In terms of biological role, aquaglyceroporins form homotetrameric transmembrane channels, with each monomer independently mediating glycerol and water transport across the plasma membrane along their osmotic gradient. Could also be permeable to urea. Also participates in cell permeability to H2O2 and H2O2-mediated signaling. In skin, transports glycerol to the epidermis and stratum corneum, where it maintains hydration, elasticity, and supports lipid biosynthesis for barrier repair. In kidney, contributes to the reabsorption of water, helping the body maintain proper fluid balance. This chain is Aquaporin-3, found in Sus scrofa (Pig).